Here is a 239-residue protein sequence, read N- to C-terminus: Serine protease SplF (239 aa).

Residues 1–36 (MNKNIIIKSIAALTILTSITGVGTTMVEGIQQTAKA) form the signal peptide. Catalysis depends on charge relay system residues histidine 75, aspartate 114, and serine 192.

This sequence belongs to the peptidase S1B family.

It localises to the secreted. In Staphylococcus aureus (strain NCTC 8325 / PS 47), this protein is Serine protease SplF (splF).